The following is a 187-amino-acid chain: Probable carboxylesterase Culp7 (187 aa).

The cysteines at positions 15 and 69 are disulfide-linked. Residue serine 80 is the Nucleophile of the active site. Cysteine 151 and cysteine 158 form a disulfide bridge. Aspartate 155 is an active-site residue. The Proton donor/acceptor role is filled by histidine 167.

Belongs to the cutinase family.

It is found in the cytoplasm. The protein resides in the cell membrane. The protein localises to the secreted. Its subcellular location is the cell wall. In terms of biological role, may have a role in cell wall processes. Does not exhibit cutinase activity. This Mycobacterium tuberculosis (strain ATCC 25618 / H37Rv) protein is Probable carboxylesterase Culp7.